The primary structure comprises 565 residues: uncharacterized protein (565 aa).

The next 13 membrane-spanning stretches (helical) occupy residues 8–28 (ISFIAAMLIVIGSSIGAGIFF), 43–63 (LAIFNWLVASVAVIAMALALI), 95–115 (MTYLYLPLTFFFMPLYFICSI), 137–157 (WLIWLALALIITTYFLTIPPL), 167–187 (MVVSAVKFIPLVFVPIIGFIV), 227–247 (FTGIGAGMGSFISIAAIFFAY), 268–288 (WALFLGLLITTLFYLILAVAL), 314–334 (IVFGVVNLMIGIGVLGIINGF), 367–387 (VVGVIYCLVLSLTVQVLFTVI), 424–444 (ATWTSLFTFAFIACAIFGAIV), 460–480 (FLPAAWIAVVVNCISVFVTII), 482–502 (PFINLFLLFGYDETVAHTVLG), and 516–536 (VMLIVVLVFFAIISFLPVYVE).

It to M.pneumoniae MPN_095 and MPN_096.

It localises to the cell membrane. This is an uncharacterized protein from Mycoplasma pneumoniae (strain ATCC 29342 / M129 / Subtype 1) (Mycoplasmoides pneumoniae).